Here is a 320-residue protein sequence, read N- to C-terminus: MRPAGTLASFLERCSARKRGRGCVVLTGAGCSTESGIPDYRGPNGQYHRADFVLLTFQKFMRDDNEKRRYWARSMLGYSTMCGASCNAAHMALQAFTKSGAVAHILTQNVDGLHHLATYGGVGDAEEEHYYKYTTSDAPLKELHGNIHNVICTSCGFFMPRARLQRELRERNPGFYEQYGADVSRTRPDGDYSAPTEAVNAMHLVMCPRCNGFFKPHVVLFGENVPKPIVEATMSLVRDKASCLLCLGTSLQVYSAYRYVLQANQLGIPVAIVNAGTTRGDAIADLKLDVESVGSVLAETAHEMLGVPASMFFRRKTIQL.

A mitochondrion-targeting transit peptide spans methionine 1 to glycine 22. One can recognise a Deacetylase sirtuin-type domain in the interval cysteine 23–leucine 320. NAD(+)-binding positions include glycine 28–histidine 48 and glutamine 108–aspartate 111. Histidine 144 acts as the Proton acceptor in catalysis. Zn(2+)-binding residues include cysteine 152, cysteine 155, cysteine 207, and cysteine 210. Residues glycine 248–serine 250, asparagine 274–glycine 276, and glycine 294 each bind NAD(+).

The protein belongs to the sirtuin family. Class II subfamily. The cofactor is Zn(2+).

It is found in the mitochondrion matrix. The enzyme catalyses N(6)-acetyl-L-lysyl-[protein] + NAD(+) + H2O = 2''-O-acetyl-ADP-D-ribose + nicotinamide + L-lysyl-[protein]. In terms of biological role, NAD-dependent protein deacylase. Catalyzes the NAD-dependent hydrolysis of acyl groups from lysine residues. This Leishmania major protein is NAD-dependent protein deacylase SIR2rp2 (SIR2rp2).